We begin with the raw amino-acid sequence, 241 residues long: MPKHGKKYLEALKLVDVTRRYSPKEAVELVKKVAHADFDESIDLHIKLNIDPRHADQNVRGTVTLPHGTGRTPRVLVFAVGEAARIAEEAGADYVGSDDLIRQIEGGWLEFDAAIAMADQMGKVGPLGRILGRRGLMPNPRTGTVVRNPEDLPAVIREIKGGRVEFRNDRTGNIHLQIGRKSFTDQQLLENLYVAVDAIARARPQAVKGQFFQSMTIAPTMGPGIPLDVATTVEEARQFVT.

It belongs to the universal ribosomal protein uL1 family. As to quaternary structure, part of the 50S ribosomal subunit.

Its function is as follows. Binds directly to 23S rRNA. The L1 stalk is quite mobile in the ribosome, and is involved in E site tRNA release. In terms of biological role, protein L1 is also a translational repressor protein, it controls the translation of the L11 operon by binding to its mRNA. This is Large ribosomal subunit protein uL1 from Thermomicrobium roseum (strain ATCC 27502 / DSM 5159 / P-2).